The chain runs to 417 residues: Gamma-glutamyl phosphate reductase (417 aa).

This sequence belongs to the gamma-glutamyl phosphate reductase family.

The protein localises to the cytoplasm. The catalysed reaction is L-glutamate 5-semialdehyde + phosphate + NADP(+) = L-glutamyl 5-phosphate + NADPH + H(+). The protein operates within amino-acid biosynthesis; L-proline biosynthesis; L-glutamate 5-semialdehyde from L-glutamate: step 2/2. Its function is as follows. Catalyzes the NADPH-dependent reduction of L-glutamate 5-phosphate into L-glutamate 5-semialdehyde and phosphate. The product spontaneously undergoes cyclization to form 1-pyrroline-5-carboxylate. The sequence is that of Gamma-glutamyl phosphate reductase from Escherichia coli O6:H1 (strain CFT073 / ATCC 700928 / UPEC).